We begin with the raw amino-acid sequence, 393 residues long: Asparagine--oxo-acid transaminase (393 aa).

L-asparagine-binding residues include Gly39, Trp126, and Asn176. Residue Lys239 is modified to N6-(pyridoxal phosphate)lysine. Arg370 lines the L-asparagine pocket.

Belongs to the class-I pyridoxal-phosphate-dependent aminotransferase family. Pyridoxal 5'-phosphate is required as a cofactor.

The enzyme catalyses a 2-oxocarboxylate + L-asparagine = 2-oxosuccinamate + an L-alpha-amino acid. It catalyses the reaction L-asparagine + 2-oxoglutarate = 2-oxosuccinamate + L-glutamate. Its function is as follows. Catalyzes the transamination reaction between L-asparagine and 2-oxoglutarate to produce L-glutamate and 2-oxosuccinamate. Is not active with pyruvate as amine acceptor. May also use other amino acids as substrates. The polypeptide is Asparagine--oxo-acid transaminase (Streptococcus mutans serotype c (strain ATCC 700610 / UA159)).